Here is a 632-residue protein sequence, read N- to C-terminus: MGILNSISTPADLKALNDEDLDALAKEIRTFLVDKVAATGGHLGPNLGVVELTIGLHRVFDSPQDPIIFDTSHQSYVHKILTGRAKDFDSLRQKDGLSGYTCRAESEHDWTESSHASAALSYADGLSKAKQLDGDTTHSVVAVVGDGALTGGMCWEALNNIAAGKDRKVVVVVNDNGRSYSPTIGGFAENLAGLRMQPFYDRFMEKGKTSLKSMGWVGERTFEALHAFKEGVKSTVIPTEMFPELGMKYVGPVDGHNQKAVDNALKYAHDYDGPIIVHMVTEKGRGYAPAEQDLDELMHSTGVIDPLTGAPKSASKPGWTSVFSDELVKIGAQNENVVAITAAMAGPTGLSKFEANFPNRFFDVGIAEQHAVTSAAGLALGGKHPVVAIYSTFLNRAFDQLLMDVGMLNQPVTLVLDRSGVTGSDGASHNGVWDMALTSIVPGVQVAAPRDEDSLRELLNEAISIDDGPTVVRFPKGDLPTPIVAIDTLEDGVDVLAYEDATEDDAPSVLIVAVGERATVALEVASRITQHGVNVTVVDPRWIVPIPQSLVALSDDHDLVITIEDGVIHGGVGSLLSDALNASEVDTPRRQIAVPQKYLDHASRSEVFADYGLDADGIETTVVGWLDSLFGE.

Residues His-73 and 114 to 116 (SHA) each bind thiamine diphosphate. A Mg(2+)-binding site is contributed by Asp-146. Thiamine diphosphate-binding positions include 147-148 (GA), Asn-176, Tyr-287, and Glu-368. Residue Asn-176 coordinates Mg(2+).

This sequence belongs to the transketolase family. DXPS subfamily. As to quaternary structure, homodimer. The cofactor is Mg(2+). Thiamine diphosphate is required as a cofactor.

It catalyses the reaction D-glyceraldehyde 3-phosphate + pyruvate + H(+) = 1-deoxy-D-xylulose 5-phosphate + CO2. Its pathway is metabolic intermediate biosynthesis; 1-deoxy-D-xylulose 5-phosphate biosynthesis; 1-deoxy-D-xylulose 5-phosphate from D-glyceraldehyde 3-phosphate and pyruvate: step 1/1. In terms of biological role, catalyzes the acyloin condensation reaction between C atoms 2 and 3 of pyruvate and glyceraldehyde 3-phosphate to yield 1-deoxy-D-xylulose-5-phosphate (DXP). This chain is 1-deoxy-D-xylulose-5-phosphate synthase, found in Corynebacterium glutamicum (strain R).